The primary structure comprises 408 residues: MFLNSLDLPGQPDNSRIVVAMSGGVDSSVVAGLLKKEGYDVIGITLQLYDHGAATHRVGACCAGQDIEDARRVAETLGIPHYVLDYEKRFREAVIDPFAESYAHGETPVPCVACNQTVKFADLLATARELGADALATGHYIRSRPHGAHRALFRPFDVERDQSYFLFATTQEQIDYLRFPLGDLPKAHVREIATEMGFVVADKHDSQDICFVPQGKYSDVITKLRPEAVNPGVIVHIDGQVLGKHSGIVNYTVGQRRGIGVATGEALYVVYLDVENARVIVGPREMLETHKLFLRDVNWLGDERLDNFPSDGLEMAVKVRSTRPSHLARLHYQEGVFSVDFLECENSVAPGQACVFYDGNGDGARILGGGFVTHSQRAVGVEMMLRRVLCNPETKAAVSSEFKTTASK.

ATP contacts are provided by residues 20 to 27 and L46; that span reads AMSGGVDS. The Nucleophile role is filled by C114. C114 and C210 form a disulfide bridge. G138 contacts ATP. The tract at residues 160–162 is interaction with tRNA; the sequence is RDQ. C210 acts as the Cysteine persulfide intermediate in catalysis.

This sequence belongs to the MnmA/TRMU family.

The protein resides in the cytoplasm. It catalyses the reaction S-sulfanyl-L-cysteinyl-[protein] + uridine(34) in tRNA + AH2 + ATP = 2-thiouridine(34) in tRNA + L-cysteinyl-[protein] + A + AMP + diphosphate + H(+). Functionally, catalyzes the 2-thiolation of uridine at the wobble position (U34) of tRNA, leading to the formation of s(2)U34. This Bartonella quintana (strain Toulouse) (Rochalimaea quintana) protein is tRNA-specific 2-thiouridylase MnmA.